The sequence spans 412 residues: Glutamate-1-semialdehyde 2,1-aminomutase (412 aa).

Lys260 carries the N6-(pyridoxal phosphate)lysine modification.

It belongs to the class-III pyridoxal-phosphate-dependent aminotransferase family. HemL subfamily. It depends on pyridoxal 5'-phosphate as a cofactor.

It is found in the cytoplasm. It catalyses the reaction (S)-4-amino-5-oxopentanoate = 5-aminolevulinate. It participates in porphyrin-containing compound metabolism; protoporphyrin-IX biosynthesis; 5-aminolevulinate from L-glutamyl-tRNA(Glu): step 2/2. This is Glutamate-1-semialdehyde 2,1-aminomutase from Methanocorpusculum labreanum (strain ATCC 43576 / DSM 4855 / Z).